Here is a 146-residue protein sequence, read N- to C-terminus: Ribosome maturation factor RimP (146 aa).

This sequence belongs to the RimP family.

It localises to the cytoplasm. Functionally, required for maturation of 30S ribosomal subunits. The protein is Ribosome maturation factor RimP of Helicobacter pylori (strain ATCC 700392 / 26695) (Campylobacter pylori).